The chain runs to 190 residues: Potassium-transporting ATPase KdpC subunit (190 aa).

Residues 10–30 (TFIFLLLITGGVYPLLTTVLG) traverse the membrane as a helical segment.

Belongs to the KdpC family. The system is composed of three essential subunits: KdpA, KdpB and KdpC.

The protein localises to the cell inner membrane. Part of the high-affinity ATP-driven potassium transport (or Kdp) system, which catalyzes the hydrolysis of ATP coupled with the electrogenic transport of potassium into the cytoplasm. This subunit acts as a catalytic chaperone that increases the ATP-binding affinity of the ATP-hydrolyzing subunit KdpB by the formation of a transient KdpB/KdpC/ATP ternary complex. The polypeptide is Potassium-transporting ATPase KdpC subunit (Escherichia coli O139:H28 (strain E24377A / ETEC)).